The sequence spans 178 residues: MLSASPPAQATVRMLGIDPGLRFTGWGVIEATGNRLRHIADGVIATDSTESVPARLRVLHDTLTSLLVTYHPDEAAVEETYVNRNGTATLKLGYARGVALLAPALRNVPVAEYGAKAVKLAVVGTGGATKDQVQMMVQRLLPGATLKRADAADALAVAICHAHHRASRSAWARGAVMA.

Active-site residues include D18, E78, and D150. Mg(2+) is bound by residues D18, E78, and D150.

This sequence belongs to the RuvC family. As to quaternary structure, homodimer which binds Holliday junction (HJ) DNA. The HJ becomes 2-fold symmetrical on binding to RuvC with unstacked arms; it has a different conformation from HJ DNA in complex with RuvA. In the full resolvosome a probable DNA-RuvA(4)-RuvB(12)-RuvC(2) complex forms which resolves the HJ. It depends on Mg(2+) as a cofactor.

Its subcellular location is the cytoplasm. It catalyses the reaction Endonucleolytic cleavage at a junction such as a reciprocal single-stranded crossover between two homologous DNA duplexes (Holliday junction).. In terms of biological role, the RuvA-RuvB-RuvC complex processes Holliday junction (HJ) DNA during genetic recombination and DNA repair. Endonuclease that resolves HJ intermediates. Cleaves cruciform DNA by making single-stranded nicks across the HJ at symmetrical positions within the homologous arms, yielding a 5'-phosphate and a 3'-hydroxyl group; requires a central core of homology in the junction. The consensus cleavage sequence is 5'-(A/T)TT(C/G)-3'. Cleavage occurs on the 3'-side of the TT dinucleotide at the point of strand exchange. HJ branch migration catalyzed by RuvA-RuvB allows RuvC to scan DNA until it finds its consensus sequence, where it cleaves and resolves the cruciform DNA. This is Crossover junction endodeoxyribonuclease RuvC from Granulibacter bethesdensis (strain ATCC BAA-1260 / CGDNIH1).